The following is an 837-amino-acid chain: Translation initiation factor IF-2 (837 aa).

Basic and acidic residues predominate over residues 97-139 (AEEIEAEQRRELEEQRAAEEAARLKAEQEARERAEEEARRQAE). The interval 97-253 (AEEIEAEQRR…QHGFQSPTGP (157 aa)) is disordered. Positions 140 to 175 (AAKAQTAETAAPAAAESASSAEPAQVVAAVEAAAPA) are enriched in low complexity. Basic and acidic residues predominate over residues 176–197 (PERKKEEPRRVEKPRSDDDERR). Basic residues predominate over residues 198–208 (DRKHAQHRPSL). A compositionally biased stretch (basic and acidic residues) spans 219-229 (RSGEDEADGFR). Residues 230-244 (RGGRGGKSKLKKRNQ) are compositionally biased toward basic residues. The region spanning 337–504 (ARAPVVTVMG…AVLLQAEILE (168 aa)) is the tr-type G domain. The interval 346–353 (GHVDHGKT) is G1. 346 to 353 (GHVDHGKT) provides a ligand contact to GTP. Residues 371-375 (GITQH) are G2. Residues 392 to 395 (DTPG) form a G3 region. GTP is bound by residues 392 to 396 (DTPGH) and 446 to 449 (NKID). A G4 region spans residues 446-449 (NKID). The G5 stretch occupies residues 482-484 (SAK).

Belongs to the TRAFAC class translation factor GTPase superfamily. Classic translation factor GTPase family. IF-2 subfamily.

The protein resides in the cytoplasm. One of the essential components for the initiation of protein synthesis. Protects formylmethionyl-tRNA from spontaneous hydrolysis and promotes its binding to the 30S ribosomal subunits. Also involved in the hydrolysis of GTP during the formation of the 70S ribosomal complex. In Stutzerimonas stutzeri (strain A1501) (Pseudomonas stutzeri), this protein is Translation initiation factor IF-2.